A 266-amino-acid chain; its full sequence is Small ribosomal subunit protein eS1 (266 aa).

Residues 237–266 (DGGSKTGEVGETGSKVDRPEGYEPPVQETV) are disordered.

The protein belongs to the eukaryotic ribosomal protein eS1 family. As to quaternary structure, component of the small ribosomal subunit. Mature ribosomes consist of a small (40S) and a large (60S) subunit. The 40S subunit contains about 33 different proteins and 1 molecule of RNA (18S). The 60S subunit contains about 49 different proteins and 3 molecules of RNA (28S, 5.8S and 5S).

Its subcellular location is the cytoplasm. This is Small ribosomal subunit protein eS1 from Lysiphlebus testaceipes (Greenbugs aphid parastoid).